Here is a 159-residue protein sequence, read N- to C-terminus: Large ribosomal subunit protein uL11 (159 aa).

The protein belongs to the universal ribosomal protein uL11 family. As to quaternary structure, part of the ribosomal stalk of the 50S ribosomal subunit. Interacts with L10 and the large rRNA to form the base of the stalk. L10 forms an elongated spine to which L12 dimers bind in a sequential fashion forming a multimeric L10(L12)X complex.

In terms of biological role, forms part of the ribosomal stalk which helps the ribosome interact with GTP-bound translation factors. The chain is Large ribosomal subunit protein uL11 from Methanococcus maripaludis (strain C5 / ATCC BAA-1333).